A 426-amino-acid polypeptide reads, in one-letter code: MFRTKRSALVRRLWRSRAPGGEDEEEGAGGGGGGGELRGEGATDSRAHGAGGGGPGRAGCCLGKAVRGAKGHHHPHPPAAGAGAAGGAEADLKALTHSVLKKLKERQLELLLQAVESRGGTRTACLLLPGRLDCRLGPGAPAGAQPAQPPSSYSLPLLLCKVFRWPDLRHSSEVKRLCCCESYGKINPELVCCNPHHLSRLCELESPPPPYSRYPMDFLKPTADCPDAVPSSAETGGTNYLAPGGLSDSQLLLEPGDRSHWCVVAYWEEKTRVGRLYCVQEPSLDIFYDLPQGNGFCLGQLNSDNKSQLVQKVRSKIGCGIQLTREVDGVWVYNRSSYPIFIKSATLDNPDSRTLLVHKVFPGFSIKAFDYEKAYSLQRPNDHEFMQQPWTGFTVQISFVKGWGQCYTRQFISSCPCWLEVIFNSR.

Residues 13–55 (LWRSRAPGGEDEEEGAGGGGGGGELRGEGATDSRAHGAGGGGP) are disordered. Residues 37 to 47 (LRGEGATDSRA) are compositionally biased toward basic and acidic residues. N6-acetyllysine; alternate is present on residues Lys64 and Lys70. Residues Lys64 and Lys70 each participate in a glycyl lysine isopeptide (Lys-Gly) (interchain with G-Cter in ubiquitin); alternate cross-link. The MH1 domain occupies 64–207 (KAVRGAKGHH…LSRLCELESP (144 aa)). Zn(2+) is bound by residues Cys125, Cys180, Cys192, and His197. The short motif at 208–211 (PPPY) is the PY-motif element. Positions 208 to 217 (PPPYSRYPMD) are important for interaction with SMURF2. Ser249 is subject to Phosphoserine. The region spanning 261–426 (WCVVAYWEEK…CWLEVIFNSR (166 aa)) is the MH2 domain.

This sequence belongs to the dwarfin/SMAD family. Interacts with WWP1. Interacts with COPS5. Interacts with NEDD4L. Interacts with STAMBP. Interacts with RNF111, AXIN1 and AXIN2. Interacts with PPP1R15A. Interacts (via MH2 domain) with EP300. Interacts with ACVR1B, SMURF1, SMURF2 and TGFBR1; SMAD7 recruits SMURF1 and SMURF2 to the TGF-beta receptor and regulates its degradation. Interacts with PDPK1 (via PH domain). Interacts with TSC22D1/TSC-22; the interaction requires TGF-beta and the interaction is inhibited by TGFBR1. In terms of processing, phosphorylation on Ser-249 does not affect its stability, nuclear localization or inhibitory function in TGFB signaling; however it affects its ability to regulate transcription. Phosphorylated by PDPK1. Post-translationally, ubiquitinated by WWP1. Polyubiquitinated by RNF111, which is enhanced by AXIN1 and promotes proteasomal degradation. In response to TGF-beta, ubiquitinated by SMURF1; which promotes its degradation. Acetylation prevents ubiquitination and degradation mediated by SMURF1. In terms of tissue distribution, ubiquitous with higher expression in the lung and vascular endothelium.

The protein resides in the nucleus. Its subcellular location is the cytoplasm. Its function is as follows. Antagonist of signaling by TGF-beta (transforming growth factor) type 1 receptor superfamily members; has been shown to inhibit TGF-beta (Transforming growth factor) and activin signaling by associating with their receptors thus preventing SMAD2 access. Functions as an adapter to recruit SMURF2 to the TGF-beta receptor complex. Also acts by recruiting the PPP1R15A-PP1 complex to TGFBR1, which promotes its dephosphorylation. Positively regulates PDPK1 kinase activity by stimulating its dissociation from the 14-3-3 protein YWHAQ which acts as a negative regulator. In Homo sapiens (Human), this protein is Mothers against decapentaplegic homolog 7 (SMAD7).